The following is a 363-amino-acid chain: Endopolygalacturonase 1 (363 aa).

Residues M1–A17 form the signal peptide. A propeptide spanning residues S18–R26 is cleaved from the precursor. A disulfide bridge links C29 with C44. PbH1 repeat units follow at residues S188–S209, G210–S230, V239–T260, and V268–Q290. The Proton donor role is filled by D202. Residues C204 and C220 are joined by a disulfide bond. A glycan (N-linked (GlcNAc...) asparagine) is linked at N212. Residue H224 is part of the active site. Disulfide bonds link C330-C333 and C352-C363.

The protein belongs to the glycosyl hydrolase 28 family.

The protein localises to the secreted. The catalysed reaction is (1,4-alpha-D-galacturonosyl)n+m + H2O = (1,4-alpha-D-galacturonosyl)n + (1,4-alpha-D-galacturonosyl)m.. Involved in maceration and soft-rotting of plant tissue. Hydrolyzes the 1,4-alpha glycosidic bonds of de-esterified pectate in the smooth region of the plant cell wall. The chain is Endopolygalacturonase 1 (PG1) from Colletotrichum lindemuthianum (Bean anthracnose fungus).